We begin with the raw amino-acid sequence, 329 residues long: Serine dehydratase-like (329 aa).

Position 1 is an N-acetylmethionine (M1). K48 carries the post-translational modification N6-(pyridoxal phosphate)lysine.

The protein belongs to the serine/threonine dehydratase family. In terms of assembly, monomer. Homodimer. Pyridoxal 5'-phosphate serves as cofactor. Expressed in lung cancer cell lines.

It carries out the reaction L-serine = pyruvate + NH4(+). The enzyme catalyses L-threonine = 2-oxobutanoate + NH4(+). It catalyses the reaction L-glutamate = D-glutamate. In terms of biological role, catalyzes the pyridoxal-phosphate-dependent dehydrative deamination of L-threonine and L-serine to ammonia and alpha-ketobutyrate and pyruvate, respectively. Also exhibits racemase activity towards L-glutamate and D-glutamate. The polypeptide is Serine dehydratase-like (SDSL) (Homo sapiens (Human)).